The chain runs to 607 residues: MDNLNDALEKLKLTGTECTSDKLDGCLDCLLQALGHNNTESSEKIQQSGILQLFASILNSQSSCASKVAHIVAEIAKNELMRIPCVEADLIPPLVQLLHSKDQEVLLQTGRALGNICYDNHEGRRTVDQEGGAQIVVDHLRSRCTLTDPSSEKLMTVFCGMLMNYSSENDSLQTQLIQMGVIPILVDLLAVHSQNTALTEMCLVAFGNLAELESSKEQFAATNVAEVIVKLFKKQTEHEKREVIFEVLAPLAENDAIKMQLVEAGLVECLLDIVQQTVNSEKDDDVAELKTSSDLMVLLLLGDESMQKLFEGGKGSVFQRVLSWLPSNNHQLQLAGALAIANFARNDGNCIHMVDSEIVQKLLDLLDRHVEDGNVTVQHAALSALRNLAIPVVNKAKMLSAGVTEEVLKFLPSEMPPVQFKLLGTLRMLIDAQAEAAEQLGKNEKLVERLVEWCEAKDHAGVMGESNRLLSALIRHSKSKDVIRTTVQSGGIKHLVTMATSEHVIMQNEALVALGLIAALELQAAERDLESAKLVEVLHRLLSDERSAPEIKYNSMVLICAVMGSEPLHKEVQKLAFLDVVSKLRSHENKTVAQQASLTEQKFTVQS.

5 ARM repeats span residues 79-118, 170-211, 347-390, 391-431, and 479-519; these read ELMRIPCVEADLIPPLVQLLHSKDQEVLLQTGRALGNICY, DSLQ…NLAE, DGNC…NLAI, PVVN…MLID, and SKDV…LIAA.

In terms of assembly, interacts with ralB. Probably interacts with the post-translationally isoprenylated (geranyl-geranylation) forms of ral proteins. Interacts with both GDP-bound and GTP-bound forms of ralA, but interaction is much stronger with ralA-GDP.

It is found in the cytoplasm. It localises to the cytosol. The protein resides in the endoplasmic reticulum. Its subcellular location is the mitochondrion. Its function is as follows. Stimulates GDP/GTP exchange reaction of a group of small GTP-binding proteins (G proteins) including Rap1a/Rap1b, RhoA, RhoB and KRas, by stimulating the dissociation of GDP from and the subsequent binding of GTP to each small G protein. This Xenopus laevis (African clawed frog) protein is Rap1 GTPase-GDP dissociation stimulator 1-B (rap1gds1-b).